The chain runs to 200 residues: Probable nicotinate-nucleotide adenylyltransferase (200 aa).

It belongs to the NadD family.

It catalyses the reaction nicotinate beta-D-ribonucleotide + ATP + H(+) = deamido-NAD(+) + diphosphate. It functions in the pathway cofactor biosynthesis; NAD(+) biosynthesis; deamido-NAD(+) from nicotinate D-ribonucleotide: step 1/1. In terms of biological role, catalyzes the reversible adenylation of nicotinate mononucleotide (NaMN) to nicotinic acid adenine dinucleotide (NaAD). In Clavibacter sepedonicus (Clavibacter michiganensis subsp. sepedonicus), this protein is Probable nicotinate-nucleotide adenylyltransferase.